We begin with the raw amino-acid sequence, 98 residues long: Dehydrin HIRD11 (98 aa).

Positions 1–98 (MAGLINKIGD…HSSSSDSDSD (98 aa)) are disordered. Residues 19–72 (KEGEHKKEEEHKKHVDEHKSGEHKEGIVDKIKDKIHGGEGKSHDGEGKSHDGEK) are compositionally biased toward basic and acidic residues. Positions 73–82 (KKKKDKKEKK) are enriched in basic residues.

This sequence belongs to the KS-type dehydrin family. As to quaternary structure, interacts with PXL1. Phosphorylated in vivo. Phosphorylated in vitro by PXL1. In terms of tissue distribution, highly expressed in the cambial zone of the stem vasculature (at protein level). Expressed in roots, rosettes leaves, stems, cauline leaves, flowers and siliques.

It is found in the cytoplasm. The protein localises to the nucleus. In terms of biological role, intrinsically disordered and metal-binding protein. Binds to the divalent cations cobalt, nickel, copper and zinc, but not to magnesium, calcium, manganese or cadmium. Binding to metal ions decreases disordered state, decreases susceptibility to trypsin and promotes self-association. Can reduce the formation of reactive oxygen species (ROS) in a copper-ascorbate in vitro system. This chain is Dehydrin HIRD11, found in Arabidopsis thaliana (Mouse-ear cress).